The following is a 91-amino-acid chain: Anther-specific protein RTS (91 aa).

Positions 1–21 (MVRVGAAAAVLVLAAAAAAMA) are cleaved as a signal peptide.

Its function is as follows. Required for tapetum and pollen development. This chain is Anther-specific protein RTS, found in Oryza sativa subsp. japonica (Rice).